An 88-amino-acid chain; its full sequence is Small ribosomal subunit protein bS16 (88 aa).

Belongs to the bacterial ribosomal protein bS16 family.

The protein is Small ribosomal subunit protein bS16 of Baumannia cicadellinicola subsp. Homalodisca coagulata.